We begin with the raw amino-acid sequence, 502 residues long: Xylulose kinase (502 aa).

82–83 is a binding site for substrate; the sequence is MH. D240 functions as the Proton acceptor in the catalytic mechanism.

Belongs to the FGGY kinase family.

It carries out the reaction D-xylulose + ATP = D-xylulose 5-phosphate + ADP + H(+). Functionally, catalyzes the phosphorylation of D-xylulose to D-xylulose 5-phosphate. In Levilactobacillus brevis (Lactobacillus brevis), this protein is Xylulose kinase.